The sequence spans 176 residues: NAD(P)H-quinone oxidoreductase subunit J (176 aa).

The protein belongs to the complex I 30 kDa subunit family. NDH-1 can be composed of about 15 different subunits; different subcomplexes with different compositions have been identified which probably have different functions.

The protein resides in the cellular thylakoid membrane. It carries out the reaction a plastoquinone + NADH + (n+1) H(+)(in) = a plastoquinol + NAD(+) + n H(+)(out). The catalysed reaction is a plastoquinone + NADPH + (n+1) H(+)(in) = a plastoquinol + NADP(+) + n H(+)(out). Its function is as follows. NDH-1 shuttles electrons from an unknown electron donor, via FMN and iron-sulfur (Fe-S) centers, to quinones in the respiratory and/or the photosynthetic chain. The immediate electron acceptor for the enzyme in this species is believed to be plastoquinone. Couples the redox reaction to proton translocation, and thus conserves the redox energy in a proton gradient. Cyanobacterial NDH-1 also plays a role in inorganic carbon-concentration. In Nostoc punctiforme (strain ATCC 29133 / PCC 73102), this protein is NAD(P)H-quinone oxidoreductase subunit J.